Reading from the N-terminus, the 702-residue chain is Kinesin-like protein KIF3A (702 aa).

The Kinesin motor domain maps to 14–345; it reads NVKVVVRCRP…LRYANRAKNI (332 aa). 100–107 is a binding site for ATP; that stretch reads GQTGTGKT. The stretch at 355–593 forms a coiled coil; it reads PKDALLRQFQ…LSRELRLQML (239 aa). Disordered regions lie at residues 372-424 and 667-702; these read KKLE…KMIE and LMKL…SLLQ. Acidic residues predominate over residues 376–400; sequence EGEEISGSDISGSEEDDDEEGEIGE. A compositionally biased stretch (basic and acidic residues) spans 410–424; sequence DQAGKKKVSPDKMIE. Residues 600 to 702 form a globular region; sequence PRDYQEMIEN…PETVIDSLLQ (103 aa). Residues 675-690 are compositionally biased toward basic residues; the sequence is TSKGKARPKTGRRKRS. Position 690 is a phosphoserine (serine 690).

This sequence belongs to the TRAFAC class myosin-kinesin ATPase superfamily. Kinesin family. Kinesin II subfamily. As to quaternary structure, heterodimer of KIF3A and KIF3B. Interacts with CIMAP3. Interacts with CLN3. Interacts with DCTN1. Interacts with FLCN. Interacts with AP3B1.

Its subcellular location is the cytoplasm. It localises to the cytoskeleton. It is found in the cell projection. The protein resides in the cilium. The protein localises to the microtubule organizing center. Its subcellular location is the centrosome. It localises to the centriole. Functionally, microtubule-based anterograde translocator for membranous organelles. Plus end-directed microtubule sliding activity in vitro. Plays a role in primary cilia formation. Plays a role in centriole cohesion and subdistal appendage organization and function. Regulates the formation of the subdistal appendage via recruitment of DCTN1 to the centriole. Also required for ciliary basal feet formation and microtubule anchoring to mother centriole. The sequence is that of Kinesin-like protein KIF3A (KIF3A) from Pongo abelii (Sumatran orangutan).